The chain runs to 343 residues: Dihydroorotase (343 aa).

Zn(2+)-binding residues include His14 and His16. Residues 16–18 and Asn42 contribute to the substrate site; that span reads HLR. Zn(2+) contacts are provided by Lys97, His136, His170, and Asp242. Lys97 carries the post-translational modification N6-carboxylysine. Residue His136 participates in substrate binding. The active site involves Asp242. Substrate is bound by residues His246 and Ala258.

This sequence belongs to the metallo-dependent hydrolases superfamily. DHOase family. Class II DHOase subfamily. In terms of assembly, homodimer. The cofactor is Zn(2+).

It carries out the reaction (S)-dihydroorotate + H2O = N-carbamoyl-L-aspartate + H(+). Its pathway is pyrimidine metabolism; UMP biosynthesis via de novo pathway; (S)-dihydroorotate from bicarbonate: step 3/3. Its function is as follows. Catalyzes the reversible cyclization of carbamoyl aspartate to dihydroorotate. The polypeptide is Dihydroorotase (Helicobacter hepaticus (strain ATCC 51449 / 3B1)).